Reading from the N-terminus, the 190-residue chain is Putative CRISPR system CMR subunit Cmr7 2 (190 aa).

It belongs to the CRISPR system Cmr7 family. In terms of assembly, homodimer.

Its function is as follows. CRISPR (clustered regularly interspaced short palindromic repeat) is an adaptive immune system that provides protection against mobile genetic elements (viruses, transposable elements and conjugative plasmids). CRISPR clusters contain spacers, sequences complementary to antecedent mobile elements, and target invading nucleic acids. CRISPR clusters are transcribed and processed into CRISPR RNA (crRNA). This is Putative CRISPR system CMR subunit Cmr7 2 (cmr7b) from Saccharolobus solfataricus (strain ATCC 35092 / DSM 1617 / JCM 11322 / P2) (Sulfolobus solfataricus).